Consider the following 201-residue polypeptide: MGKIIGITGGIASGKSTVTNFLRQQGFQAVDADAVVHQLQKPGGRLFEALVQHFGQEIILENGELNRPLLASLIFSNPEEQKWSNQIQGEIIREELATLREQLAQTEEIFFMDIPLLFEQDYSDWFAETWLVYVDRDAQVERLMKRDQLSKDEAESRLAAQWPLEKKKDLASQVLDNNGNQNQLLNQVHILLEGGRQDDRD.

One can recognise a DPCK domain in the interval 4–201 (IIGITGGIAS…LEGGRQDDRD (198 aa)). 12 to 17 (ASGKST) contributes to the ATP binding site.

The protein belongs to the CoaE family.

The protein localises to the cytoplasm. The catalysed reaction is 3'-dephospho-CoA + ATP = ADP + CoA + H(+). The protein operates within cofactor biosynthesis; coenzyme A biosynthesis; CoA from (R)-pantothenate: step 5/5. Its function is as follows. Catalyzes the phosphorylation of the 3'-hydroxyl group of dephosphocoenzyme A to form coenzyme A. The sequence is that of Dephospho-CoA kinase from Streptococcus pneumoniae (strain ATCC BAA-255 / R6).